Reading from the N-terminus, the 268-residue chain is Shikimate dehydrogenase (NADP(+)) (268 aa).

Shikimate is bound by residues Ser-13–Ser-15 and Thr-60. Lys-64 acts as the Proton acceptor in catalysis. An NADP(+)-binding site is contributed by Glu-76. Residues Asn-85 and Asp-100 each coordinate shikimate. NADP(+) is bound by residues Gly-124–Ala-128, Asn-148–Arg-153, and Ile-209. Tyr-211 lines the shikimate pocket. Gly-232 contacts NADP(+).

This sequence belongs to the shikimate dehydrogenase family. In terms of assembly, homodimer.

It carries out the reaction shikimate + NADP(+) = 3-dehydroshikimate + NADPH + H(+). It functions in the pathway metabolic intermediate biosynthesis; chorismate biosynthesis; chorismate from D-erythrose 4-phosphate and phosphoenolpyruvate: step 4/7. Involved in the biosynthesis of the chorismate, which leads to the biosynthesis of aromatic amino acids. Catalyzes the reversible NADPH linked reduction of 3-dehydroshikimate (DHSA) to yield shikimate (SA). In Staphylococcus aureus (strain bovine RF122 / ET3-1), this protein is Shikimate dehydrogenase (NADP(+)).